Consider the following 359-residue polypeptide: GTP cyclohydrolase FolE2 (359 aa).

Belongs to the GTP cyclohydrolase IV family.

The catalysed reaction is GTP + H2O = 7,8-dihydroneopterin 3'-triphosphate + formate + H(+). Its pathway is cofactor biosynthesis; 7,8-dihydroneopterin triphosphate biosynthesis; 7,8-dihydroneopterin triphosphate from GTP: step 1/1. Its function is as follows. Converts GTP to 7,8-dihydroneopterin triphosphate. The protein is GTP cyclohydrolase FolE2 of Cereibacter sphaeroides (strain KD131 / KCTC 12085) (Rhodobacter sphaeroides).